The sequence spans 87 residues: Cell division protein FtsL (87 aa).

The Cytoplasmic segment spans residues M1–R3. The chain crosses the membrane as a helical span at residues L4–M23. Topologically, residues R24 to P87 are periplasmic.

Belongs to the FtsL family. In terms of assembly, part of a complex composed of FtsB, FtsL and FtsQ.

The protein resides in the cell inner membrane. Essential cell division protein. May link together the upstream cell division proteins, which are predominantly cytoplasmic, with the downstream cell division proteins, which are predominantly periplasmic. The protein is Cell division protein FtsL of Xanthomonas campestris pv. campestris (strain ATCC 33913 / DSM 3586 / NCPPB 528 / LMG 568 / P 25).